A 104-amino-acid chain; its full sequence is COX assembly mitochondrial protein 1 (104 aa).

Residues Gln-10 to Lys-52 enclose the CHCH domain. 2 short sequence motifs (cx9C motif) span residues Cys-13–Cys-23 and Cys-34–Cys-44. Cystine bridges form between Cys-13–Cys-44 and Cys-23–Cys-34.

The protein belongs to the CMC family.

It is found in the mitochondrion inner membrane. Its function is as follows. Required for mitochondrial cytochrome c oxidase (COX) assembly and respiration. In Schizosaccharomyces pombe (strain 972 / ATCC 24843) (Fission yeast), this protein is COX assembly mitochondrial protein 1 (cmc1).